The primary structure comprises 103 residues: Small ribosomal subunit protein uS10 (103 aa).

Belongs to the universal ribosomal protein uS10 family. As to quaternary structure, part of the 30S ribosomal subunit.

Its function is as follows. Involved in the binding of tRNA to the ribosomes. This chain is Small ribosomal subunit protein uS10, found in Ruminiclostridium cellulolyticum (strain ATCC 35319 / DSM 5812 / JCM 6584 / H10) (Clostridium cellulolyticum).